A 133-amino-acid polypeptide reads, in one-letter code: Large ribosomal subunit protein uL22 (133 aa).

It belongs to the universal ribosomal protein uL22 family. In terms of assembly, part of the 50S ribosomal subunit.

Its function is as follows. This protein binds specifically to 23S rRNA; its binding is stimulated by other ribosomal proteins, e.g. L4, L17, and L20. It is important during the early stages of 50S assembly. It makes multiple contacts with different domains of the 23S rRNA in the assembled 50S subunit and ribosome. In terms of biological role, the globular domain of the protein is located near the polypeptide exit tunnel on the outside of the subunit, while an extended beta-hairpin is found that lines the wall of the exit tunnel in the center of the 70S ribosome. The polypeptide is Large ribosomal subunit protein uL22 (Nocardia farcinica (strain IFM 10152)).